A 98-amino-acid chain; its full sequence is NADH-ubiquinone oxidoreductase chain 4L (98 aa).

3 consecutive transmembrane segments (helical) span residues 1 to 21, 29 to 49, and 61 to 81; these read MSMV…GLLM, SLLC…VTIL, and IILL…LVMV.

This sequence belongs to the complex I subunit 4L family. As to quaternary structure, core subunit of respiratory chain NADH dehydrogenase (Complex I) which is composed of 45 different subunits.

It localises to the mitochondrion inner membrane. The enzyme catalyses a ubiquinone + NADH + 5 H(+)(in) = a ubiquinol + NAD(+) + 4 H(+)(out). Functionally, core subunit of the mitochondrial membrane respiratory chain NADH dehydrogenase (Complex I) which catalyzes electron transfer from NADH through the respiratory chain, using ubiquinone as an electron acceptor. Part of the enzyme membrane arm which is embedded in the lipid bilayer and involved in proton translocation. This Eumetopias jubatus (Steller sea lion) protein is NADH-ubiquinone oxidoreductase chain 4L (MT-ND4L).